The sequence spans 182 residues: Transmembrane and coiled-coil domain-containing protein 2 (182 aa).

2 helical membrane passes run 10–30 and 50–70; these read IIID…TLLG and VQVI…YALW. A coiled-coil region spans residues 122 to 149; the sequence is GLQEKILKKLQTVENKVKDLEGMIISQK.

It is found in the membrane. This is Transmembrane and coiled-coil domain-containing protein 2 (TMCO2) from Bos taurus (Bovine).